The sequence spans 131 residues: MAGEKNAVGSSKKKKYTGGVAKAYILSTFNNTIVNITDEKGNTLAWASAGVSGFKGTKKGTPFAAQMTAASVGRKVMGIGVKQIAIFIKGPGPGRETAIRGLQSSGLGITTIKDITPVPHDGCRPPKLRRV.

This sequence belongs to the universal ribosomal protein uS11 family. As to quaternary structure, part of the 30S ribosomal subunit. Interacts with proteins S7 and S18. Binds to IF-3.

In terms of biological role, located on the platform of the 30S subunit, it bridges several disparate RNA helices of the 16S rRNA. Forms part of the Shine-Dalgarno cleft in the 70S ribosome. This Endomicrobium trichonymphae protein is Small ribosomal subunit protein uS11.